A 481-amino-acid polypeptide reads, in one-letter code: 2-succinylbenzoate--CoA ligase (481 aa).

This sequence belongs to the ATP-dependent AMP-binding enzyme family. MenE subfamily.

It carries out the reaction 2-succinylbenzoate + ATP + CoA = 2-succinylbenzoyl-CoA + AMP + diphosphate. It participates in quinol/quinone metabolism; 1,4-dihydroxy-2-naphthoate biosynthesis; 1,4-dihydroxy-2-naphthoate from chorismate: step 5/7. The protein operates within quinol/quinone metabolism; menaquinone biosynthesis. In terms of biological role, converts 2-succinylbenzoate (OSB) to 2-succinylbenzoyl-CoA (OSB-CoA). The chain is 2-succinylbenzoate--CoA ligase from Bacillus cereus (strain Q1).